The chain runs to 923 residues: Protein translocase subunit SecA (923 aa).

ATP is bound by residues Gln86, 104 to 108, and Asp512; that span reads GEGKT. Zn(2+) contacts are provided by Cys906, Cys908, Cys917, and His918.

It belongs to the SecA family. As to quaternary structure, monomer and homodimer. Part of the essential Sec protein translocation apparatus which comprises SecA, SecYEG and auxiliary proteins SecDF-YajC and YidC. It depends on Zn(2+) as a cofactor.

It is found in the cell inner membrane. Its subcellular location is the cytoplasm. It catalyses the reaction ATP + H2O + cellular proteinSide 1 = ADP + phosphate + cellular proteinSide 2.. Its function is as follows. Part of the Sec protein translocase complex. Interacts with the SecYEG preprotein conducting channel. Has a central role in coupling the hydrolysis of ATP to the transfer of proteins into and across the cell membrane, serving both as a receptor for the preprotein-SecB complex and as an ATP-driven molecular motor driving the stepwise translocation of polypeptide chains across the membrane. This Caulobacter vibrioides (strain ATCC 19089 / CIP 103742 / CB 15) (Caulobacter crescentus) protein is Protein translocase subunit SecA.